An 862-amino-acid polypeptide reads, in one-letter code: Mismatch repair endonuclease PMS2 (862 aa).

Residues N45, D70, E109, A110, and L111 each coordinate ATP. 4 stretches are compositionally biased toward basic and acidic residues: residues 391–401 (DLEKPMVEKQD), 408–444 (TGEE…EPRR), 484–495 (PTDRAEVEKDSG), and 528–552 (GSQE…VDCH). The tract at residues 391 to 552 (DLEKPMVEKQ…DDSFSDVDCH (162 aa)) is disordered. T573 is subject to Phosphothreonine. The Nuclear localization signal signature appears at 577 to 580 (KRFK). A Phosphothreonine modification is found at T597.

It belongs to the DNA mismatch repair MutL/HexB family. As to quaternary structure, heterodimer of PMS2 and MLH1 (MutL alpha); this interaction is required for the stability of both partners. Forms a ternary complex with MutS alpha (MSH2-MSH6) or MutS beta (MSH2-MSH3). Part of the BRCA1-associated genome surveillance complex (BASC), which contains BRCA1, MSH2, MSH6, MLH1, ATM, BLM, PMS2 and the RAD50-MRE11-NBS1 protein complex. This association could be a dynamic process changing throughout the cell cycle and within subnuclear domains. Interacts with MTMR15/FAN1.

It localises to the nucleus. The catalysed reaction is ATP + H2O = ADP + phosphate + H(+). In terms of biological role, component of the post-replicative DNA mismatch repair system (MMR). Heterodimerizes with MLH1 to form MutL alpha. DNA repair is initiated by MutS alpha (MSH2-MSH6) or MutS beta (MSH2-MSH3) binding to a dsDNA mismatch, then MutL alpha is recruited to the heteroduplex. Assembly of the MutL-MutS-heteroduplex ternary complex in presence of RFC and PCNA is sufficient to activate endonuclease activity of PMS2. It introduces single-strand breaks near the mismatch and thus generates new entry points for the exonuclease EXO1 to degrade the strand containing the mismatch. DNA methylation would prevent cleavage and therefore assure that only the newly mutated DNA strand is going to be corrected. MutL alpha (MLH1-PMS2) interacts physically with the clamp loader subunits of DNA polymerase III, suggesting that it may play a role to recruit the DNA polymerase III to the site of the MMR. Also implicated in DNA damage signaling, a process which induces cell cycle arrest and can lead to apoptosis in case of major DNA damages. Possesses an ATPase activity, but in the absence of gross structural changes, ATP hydrolysis may not be necessary for proficient mismatch repair. In Homo sapiens (Human), this protein is Mismatch repair endonuclease PMS2.